Reading from the N-terminus, the 343-residue chain is Dihydroorotase (343 aa).

Residues histidine 13 and histidine 15 each contribute to the Zn(2+) site. Substrate contacts are provided by residues 15–17 (HFR) and asparagine 41. Residues lysine 98, histidine 135, and histidine 173 each coordinate Zn(2+). Lysine 98 carries the post-translational modification N6-carboxylysine. A substrate-binding site is contributed by histidine 135. Residue leucine 218 coordinates substrate. A Zn(2+)-binding site is contributed by aspartate 246. Residue aspartate 246 is part of the active site. Residues histidine 250 and alanine 262 each coordinate substrate.

The protein belongs to the metallo-dependent hydrolases superfamily. DHOase family. Class II DHOase subfamily. As to quaternary structure, homodimer. Requires Zn(2+) as cofactor.

It carries out the reaction (S)-dihydroorotate + H2O = N-carbamoyl-L-aspartate + H(+). The protein operates within pyrimidine metabolism; UMP biosynthesis via de novo pathway; (S)-dihydroorotate from bicarbonate: step 3/3. In terms of biological role, catalyzes the reversible cyclization of carbamoyl aspartate to dihydroorotate. This Marinomonas sp. (strain MWYL1) protein is Dihydroorotase.